The primary structure comprises 274 residues: Octanoyltransferase LipM (274 aa).

A BPL/LPL catalytic domain is found at 31–245 (GEVPPTLRLY…GFAEALGARL (215 aa)). Cys-147 functions as the Acyl-thioester intermediate in the catalytic mechanism.

It belongs to the octanoyltransferase LipM family. As to quaternary structure, monomer.

The enzyme catalyses octanoyl-[ACP] + L-lysyl-[protein] = N(6)-octanoyl-L-lysyl-[protein] + holo-[ACP] + H(+). The protein operates within protein modification; protein lipoylation via endogenous pathway; protein N(6)-(lipoyl)lysine from octanoyl-[acyl-carrier-protein]. Functionally, catalyzes the transfer of endogenously produced octanoic acid from octanoyl-acyl-carrier-protein onto the lipoyl domain of GcvH, an intermediate carrier during protein lipoylation. This chain is Octanoyltransferase LipM, found in Kyrpidia tusciae (strain DSM 2912 / NBRC 15312 / T2) (Bacillus tusciae).